The following is a 72-amino-acid chain: Translation initiation factor IF-1 (72 aa).

The S1-like domain maps to 1-72 (MAKEDSIEME…SKGRIVYRAR (72 aa)).

This sequence belongs to the IF-1 family. Component of the 30S ribosomal translation pre-initiation complex which assembles on the 30S ribosome in the order IF-2 and IF-3, IF-1 and N-formylmethionyl-tRNA(fMet); mRNA recruitment can occur at any time during PIC assembly.

It is found in the cytoplasm. Functionally, one of the essential components for the initiation of protein synthesis. Stabilizes the binding of IF-2 and IF-3 on the 30S subunit to which N-formylmethionyl-tRNA(fMet) subsequently binds. Helps modulate mRNA selection, yielding the 30S pre-initiation complex (PIC). Upon addition of the 50S ribosomal subunit IF-1, IF-2 and IF-3 are released leaving the mature 70S translation initiation complex. In Nitrosococcus oceani (strain ATCC 19707 / BCRC 17464 / JCM 30415 / NCIMB 11848 / C-107), this protein is Translation initiation factor IF-1.